The following is a 230-amino-acid chain: Large ribosomal subunit protein uL1c (230 aa).

It belongs to the universal ribosomal protein uL1 family. Part of the 50S ribosomal subunit.

It is found in the plastid. It localises to the chloroplast. Functionally, binds directly to 23S rRNA. Might be involved in E site tRNA release (Potential). The sequence is that of Large ribosomal subunit protein uL1c (rpl1) from Thalassiosira pseudonana (Marine diatom).